The chain runs to 384 residues: Probable L-aspartate decarboxylase (384 aa).

An N6-(pyridoxal phosphate)lysine modification is found at K233.

This sequence belongs to the group II decarboxylase family. MfnA subfamily. Pyridoxal 5'-phosphate is required as a cofactor.

The catalysed reaction is L-aspartate + H(+) = beta-alanine + CO2. The protein operates within cofactor biosynthesis; coenzyme A biosynthesis. Functionally, catalyzes the decarboxylation of L-aspartate to produce beta-alanine. The sequence is that of Probable L-aspartate decarboxylase from Pyrococcus abyssi (strain GE5 / Orsay).